We begin with the raw amino-acid sequence, 344 residues long: MAPSLRVAVTQAEPEWLDLAGTVKKTCELITEAANNGARLIAFPECWVTGYPGWIWARPVDFELNTKYIYNSLSIGSPEFEQIASTAKRHSIAVVLGFSERTSTHSLYISQAIISPQGATLLHRRKIKPTHVERAVFGDGSGADLSNVVDVDFGGDVGVVKVGALACWEHTQPLLKYHTYSQGEVIHVAAWPPIDPHPGVEHPGLWSMSAEGCQNLSQTYAVEGGGYVLHCTGVCTEKGMETMGTHKGLLFHTPGGGHSCVIGPDGRRLTQPLHGGDPAKEGIVYADLDLTNVVANRSFLDNVGHYSRPDLLWLGVDRKQKQHVIPRDEEEPSRKANVVVPKQE.

The CN hydrolase domain occupies 5 to 290; it reads LRVAVTQAEP…EGIVYADLDL (286 aa). Catalysis depends on Glu45, which acts as the Proton acceptor. Lys126 is a catalytic residue. The active-site Nucleophile is the Cys167. The interval 324–344 is disordered; the sequence is VIPRDEEEPSRKANVVVPKQE.

This sequence belongs to the carbon-nitrogen hydrolase superfamily. Nitrilase family.

The catalysed reaction is a nitrile + 2 H2O = a carboxylate + NH4(+). It carries out the reaction 4-chlorophenylacetonitrile + 2 H2O = 4-chlorophenylacetate + NH4(+). In terms of biological role, nitrilase that hydrolyzes preferentially phenylacetonitrile and (R,S)-mandelonitrile. Also acts on dinitriles like phenylenediacetonitriles (PDAs) 1,2-PDA, 1,3-PDA, and 1,4-PDA, and cyanophenyl acetonitriles (CPAs) 2-CPA and 4-CPA. In Macrophomina phaseolina (strain MS6) (Charcoal rot fungus), this protein is Arylacetonitrilase.